Here is a 343-residue protein sequence, read N- to C-terminus: DNA repair and recombination protein RadA (343 aa).

107 to 114 (GEFGAGKS) lines the ATP pocket.

The protein belongs to the eukaryotic RecA-like protein family.

In terms of biological role, involved in DNA repair and in homologous recombination. Binds and assemble on single-stranded DNA to form a nucleoprotein filament. Hydrolyzes ATP in a ssDNA-dependent manner and promotes DNA strand exchange between homologous DNA molecules. In Haloquadratum walsbyi (strain DSM 16790 / HBSQ001), this protein is DNA repair and recombination protein RadA.